The sequence spans 185 residues: Ribosome-recycling factor (185 aa).

This sequence belongs to the RRF family.

The protein resides in the cytoplasm. Responsible for the release of ribosomes from messenger RNA at the termination of protein biosynthesis. May increase the efficiency of translation by recycling ribosomes from one round of translation to another. This is Ribosome-recycling factor from Haemophilus influenzae (strain ATCC 51907 / DSM 11121 / KW20 / Rd).